A 174-amino-acid polypeptide reads, in one-letter code: Adenylate kinase (174 aa).

The segment at 12–41 (STGDMLRAAIKAGTPLGLEAKKIIDEGGLV) is NMP. Residues Thr-13, Arg-18, 39-41 (GLV), 67-70 (GFPR), and Gln-74 contribute to the AMP site. Residues 104 to 141 (GRRVHLASGRTYHVTYNPPKVEGKDDVTGEDLIQRDDD) form an LID region. ATP-binding positions include Arg-105 and 114 to 115 (TY). AMP contacts are provided by Arg-138 and Arg-149.

It belongs to the adenylate kinase family. As to quaternary structure, monomer.

The protein resides in the cytoplasm. The enzyme catalyses AMP + ATP = 2 ADP. The protein operates within purine metabolism; AMP biosynthesis via salvage pathway; AMP from ADP: step 1/1. Catalyzes the reversible transfer of the terminal phosphate group between ATP and AMP. Plays an important role in cellular energy homeostasis and in adenine nucleotide metabolism. This is Adenylate kinase from Neisseria lactamica.